Consider the following 443-residue polypeptide: UDP-N-acetylmuramate--L-alanine ligase (443 aa).

110–116 (GAHGKTS) contacts ATP.

This sequence belongs to the MurCDEF family.

The protein resides in the cytoplasm. The catalysed reaction is UDP-N-acetyl-alpha-D-muramate + L-alanine + ATP = UDP-N-acetyl-alpha-D-muramoyl-L-alanine + ADP + phosphate + H(+). The protein operates within cell wall biogenesis; peptidoglycan biosynthesis. Its function is as follows. Cell wall formation. The polypeptide is UDP-N-acetylmuramate--L-alanine ligase (Lactococcus lactis subsp. cremoris (strain MG1363)).